Here is a 129-residue protein sequence, read N- to C-terminus: Fluoride-specific ion channel FluC 2 (129 aa).

4 helical membrane passes run 9 to 29, 37 to 57, 74 to 94, and 100 to 120; these read LGTLISVFFFGMIGGTLRYLL, GTILVNLIGSFCLAFLTYYVI, MVGAFTTFSTFTVDILGLSTF, and YLLISVVGGFLLAYTGMILGI. 2 residues coordinate Na(+): G76 and T79.

It belongs to the fluoride channel Fluc/FEX (TC 1.A.43) family.

The protein localises to the cell membrane. It catalyses the reaction fluoride(in) = fluoride(out). Its activity is regulated as follows. Na(+) is not transported, but it plays an essential structural role and its presence is essential for fluoride channel function. Fluoride-specific ion channel. Important for reducing fluoride concentration in the cell, thus reducing its toxicity. This chain is Fluoride-specific ion channel FluC 2, found in Ligilactobacillus salivarius (strain UCC118) (Lactobacillus salivarius).